The chain runs to 403 residues: Tyrosine--tRNA ligase (403 aa).

The short motif at 42–51 is the 'HIGH' region element; it reads PTAPDLHLGH. The short motif at 226–230 is the 'KMSKS' region element; that stretch reads KMSKS. An ATP-binding site is contributed by lysine 229. In terms of domain architecture, S4 RNA-binding spans 336–396; that stretch reads MPISAVLNKA…GKKAFGRVTL (61 aa).

Belongs to the class-I aminoacyl-tRNA synthetase family. TyrS type 2 subfamily. In terms of assembly, homodimer.

The protein resides in the cytoplasm. The enzyme catalyses tRNA(Tyr) + L-tyrosine + ATP = L-tyrosyl-tRNA(Tyr) + AMP + diphosphate + H(+). In terms of biological role, catalyzes the attachment of tyrosine to tRNA(Tyr) in a two-step reaction: tyrosine is first activated by ATP to form Tyr-AMP and then transferred to the acceptor end of tRNA(Tyr). The sequence is that of Tyrosine--tRNA ligase from Pseudomonas savastanoi pv. phaseolicola (strain 1448A / Race 6) (Pseudomonas syringae pv. phaseolicola (strain 1448A / Race 6)).